A 174-amino-acid polypeptide reads, in one-letter code: Gamma-crystallin D (174 aa).

Beta/gamma crystallin 'Greek key' domains follow at residues 2–40 and 41–83; these read GKIT…RVDS and GCWM…RLIP. The segment at 84 to 87 is connecting peptide; sequence HAGS. Beta/gamma crystallin 'Greek key' domains follow at residues 88–128 and 129–171; these read HRIR…NVLE and GCWV…RRVM.

The protein belongs to the beta/gamma-crystallin family. As to expression, detected in the superior olivary complex and fibers of the ventral aoustic stria of the auditory hindbrain.

In terms of biological role, crystallins are the dominant structural components of the vertebrate eye lens. This is Gamma-crystallin D (Crygd) from Rattus norvegicus (Rat).